A 159-amino-acid polypeptide reads, in one-letter code: Large ribosomal subunit protein uL10 (159 aa).

It belongs to the universal ribosomal protein uL10 family. In terms of assembly, part of the ribosomal stalk of the 50S ribosomal subunit. The N-terminus interacts with L11 and the large rRNA to form the base of the stalk. The C-terminus forms an elongated spine to which L12 dimers bind in a sequential fashion forming a multimeric L10(L12)X complex.

Functionally, forms part of the ribosomal stalk, playing a central role in the interaction of the ribosome with GTP-bound translation factors. The polypeptide is Large ribosomal subunit protein uL10 (rplJ) (Campylobacter jejuni subsp. jejuni serotype O:2 (strain ATCC 700819 / NCTC 11168)).